The chain runs to 84 residues: Cell division protein CrgA (84 aa).

The next 2 membrane-spanning stretches (helical) occupy residues 31–51 (VAPV…VFYV) and 60–80 (ALDN…FGVS).

The protein belongs to the CrgA family.

The protein localises to the cell membrane. Functionally, involved in cell division. Coordinates growth and cell division. Required for the formation of the sporulation septa. The polypeptide is Cell division protein CrgA (Streptomyces avermitilis (strain ATCC 31267 / DSM 46492 / JCM 5070 / NBRC 14893 / NCIMB 12804 / NRRL 8165 / MA-4680)).